Consider the following 5405-residue polypeptide: IgGFc-binding protein (5405 aa).

An N-terminal signal peptide occupies residues 1 to 23; sequence MGALWSWWILWAGATLLWGLTQE. An igGFc-binding region spans residues 24–450; it reads ASVDLKNTGR…EPSCEGMQCA (427 aa). N-linked (GlcNAc...) asparagine glycosylation is found at Asn75 and Asn91. Residues 470-650 form the VWFD 1 domain; the sequence is AVCRAQGDPH…KLDDGDYLCE (181 aa). Intrachain disulfides connect Cys472–Cys611 and Cys494–Cys649. The TIL 1 domain maps to 745 to 799; sequence CPANSRYELCGPACPTSCNGAAAPSNCSGRPCVEGCVCLPGFVASGGACVPASSC. The 180-residue stretch at 862–1041 folds into the VWFD 2 domain; the sequence is GTCQGSGDPH…WQEETRPGCG (180 aa). Disulfide bonds link Cys864/Cys1003 and Cys886/Cys1040. Residues 1136–1189 form the TIL 2 domain; that stretch reads CPPHSHYEACSYGCPLSCGDLPVPGGCGSECHEGCVCDEGFALSGESCLPLASC. The 180-residue stretch at 1250 to 1429 folds into the VWFD 3 domain; sequence STCQASGDPH…EEVVPDSPCL (180 aa). 2 cysteine pairs are disulfide-bonded: Cys1252/Cys1390 and Cys1274/Cys1428. Asn1317 carries an N-linked (GlcNAc...) (complex) asparagine glycan. In terms of domain architecture, TIL 3 spans 1532–1585; the sequence is CPPNSHYELCADTCSLGCSALSAPPQCQDGCAEGCQCDSGFLYNGQACVPIQQC. The 184-residue stretch at 1671 to 1854 folds into the VWFD 4 domain; the sequence is ATCWLWGDPH…RAPGWDPLCW (184 aa). 3 disulfides stabilise this stretch: Cys1673–Cys1815, Cys1695–Cys1853, and Cys1704–Cys1812. Asn1743 carries an N-linked (GlcNAc...) asparagine glycan. The 58-residue stretch at 1950–2007 folds into the TIL 4 domain; the sequence is CPENSHYEVCGSPCPASCPSPAPLTTPAVCEGPCVEGCQCDAGFVLSADRCVPLNNGC. The VWFD 5 domain maps to 2070–2253; it reads AECQAWGDPH…VSKPCPSPCT (184 aa). Intrachain disulfides connect Cys2072–Cys2211 and Cys2094–Cys2252. Residue Asn2138 is glycosylated (N-linked (GlcNAc...) asparagine). Positions 2337–2390 constitute a TIL 5 domain; that stretch reads CPAHSHYELCGDSCPGSCPSLSAPEGCESACREGCVCDAGFVLSGDTCVPVGQC. Residues 2451-2630 enclose the VWFD 6 domain; sequence TTCQASGDPH…EEVVPDSPCL (180 aa). Disulfide bonds link Cys2453-Cys2591 and Cys2475-Cys2629. N-linked (GlcNAc...) asparagine glycosylation is present at Asn2518. The TIL 6 domain maps to 2733 to 2786; it reads CPQNSHYELCADTCSLGCSALSAPLQCPDGCAEGCQCDSGFLYNGQACVPIQQC. The VWFD 7 domain maps to 2872-3055; it reads ATCWLWGDPH…RAPGWDPLCW (184 aa). 3 disulfides stabilise this stretch: Cys2874–Cys3016, Cys2896–Cys3054, and Cys2905–Cys3013. The TIL 7 domain maps to 3151–3208; that stretch reads CPENSHYEVCGPPCPASCPSPAPLTTPAVCEGPCVEGCQCDAGFVLSADRCVPLNNGC. The 184-residue stretch at 3271–3454 folds into the VWFD 8 domain; it reads AECQAWGDPH…VSKPCPSPCT (184 aa). Intrachain disulfides connect Cys3273-Cys3412 and Cys3295-Cys3453. The 54-residue stretch at 3538–3591 folds into the TIL 8 domain; it reads CPAHSHYELCGDSCPGSCPSLSAPEGCESACREGCVCDAGFVLSGDTCVPVGQC. Positions 3652–3831 constitute a VWFD 9 domain; that stretch reads TTCQASGDPH…EEVVPDSPCL (180 aa). 2 cysteine pairs are disulfide-bonded: Cys3654/Cys3792 and Cys3676/Cys3830. Asn3719 carries N-linked (GlcNAc...) asparagine glycosylation. The region spanning 3934 to 3987 is the TIL 9 domain; the sequence is CPQNSHYELCADTCSLGCSALSAPLQCPDGCAEGCQCDSGFLYNGQACVPIQQC. Residues 4073-4256 form the VWFD 10 domain; that stretch reads ATCWLWGDPH…RAPGWDPLCW (184 aa). Disulfide bonds link Cys4075–Cys4217, Cys4097–Cys4255, and Cys4106–Cys4214. Asn4145 is a glycosylation site (N-linked (GlcNAc...) asparagine). Residues 4352–4409 form the TIL 10 domain; sequence CPENSHYEVCGPPCPASCPSPAPLTTPAVCEGPCVEGCQCDAGFVLSADRCVPLNNGC. Residues 4472–4655 form the VWFD 11 domain; it reads AECQAWGDPH…VSKPCPSPCT (184 aa). 2 disulfides stabilise this stretch: Cys4474–Cys4613 and Cys4496–Cys4654. The N-linked (GlcNAc...) asparagine glycan is linked to Asn4540. The 54-residue stretch at 4739-4792 folds into the TIL 11 domain; the sequence is CPAHSHYELCGDSCPVSCPSLSAPEGCESACREGCVCDAGFVLSGDTCVPVGQC. The region spanning 4854–5025 is the VWFD 12 domain; it reads GRCLANGGIH…RAPGSSKGCG (172 aa). Cystine bridges form between Cys4856–Cys4986 and Cys4878–Cys5024. Residues 5121 to 5174 enclose the TIL 12 domain; sequence CPAHSHYSICTRTCQGSCAALSGLTGCTTRCFEGCECDDRFLLSQGVCIPVQDC. The region spanning 5233–5404 is the VWFD 13 domain; sequence GLCVLSVGAN…WRAQDFSPCY (172 aa). Cysteines 5235 and 5372 form a disulfide.

As to quaternary structure, interacts with the Fc portion of IgG and with MUC2. As to expression, mainly expressed in placenta and colon epithelium. Expressed in thyroid, and down-regulated in thyroid carcinomas. Present in serum, with higher levels in patients with various autoimmune diseases (at protein level).

Its subcellular location is the secreted. In terms of biological role, may be involved in the maintenance of the mucosal structure as a gel-like component of the mucosa. This Homo sapiens (Human) protein is IgGFc-binding protein (FCGBP).